The chain runs to 367 residues: MLNLTSQVPEPALNGTLPQSSSCFHSDWWNWLNTIQAPFLWVLFLLAALENIFVLSVFCLHKNSCTVAEIYLGNLAMADLILALGLPFWAITIANHFDWLFGEVLCRVVNTMIYMNLYSSICFLMLVSIDRYLALVKTMSMGRMRGVRWAKLYSLVIWGCTLLLSSPMLAFRTMHEYAAEGHNVTACIIKYPSRSWMVFTNILLNSVGFLLPLSIITYCTVQILQVLRNNEMQKFKEIQTERKATVLVLAVLLLFVVCWLPFQISTFLDTLLRLGVLSGCWDEHAVDVITQISSYVAYSNSGLNPLVYVIVGKRFRKKSREVYRVLCQKGGCMGEPVQMENSMGTLRTSISVERQIHKLQDWAGKKQ.

Over 1–36 (MLNLTSQVPEPALNGTLPQSSSCFHSDWWNWLNTIQ) the chain is Extracellular. N-linked (GlcNAc...) asparagine glycosylation is found at asparagine 3 and asparagine 14. The chain crosses the membrane as a helical span at residues 37 to 60 (APFLWVLFLLAALENIFVLSVFCL). Residues 61–69 (HKNSCTVAE) lie on the Cytoplasmic side of the membrane. A helical transmembrane segment spans residues 70-94 (IYLGNLAMADLILALGLPFWAITIA). At 95-107 (NHFDWLFGEVLCR) the chain is on the extracellular side. Residues cysteine 106 and cysteine 187 are joined by a disulfide bond. A helical membrane pass occupies residues 108–129 (VVNTMIYMNLYSSICFLMLVSI). Over 130 to 151 (DRYLALVKTMSMGRMRGVRWAK) the chain is Cytoplasmic. Residue tyrosine 132 is modified to Phosphotyrosine. Residues 152–174 (LYSLVIWGCTLLLSSPMLAFRTM) form a helical membrane-spanning segment. Residues 175-197 (HEYAAEGHNVTACIIKYPSRSWM) lie on the Extracellular side of the membrane. A glycan (N-linked (GlcNAc...) asparagine) is linked at asparagine 183. Residues 198–224 (VFTNILLNSVGFLLPLSIITYCTVQIL) traverse the membrane as a helical segment. Topologically, residues 225 to 243 (QVLRNNEMQKFKEIQTERK) are cytoplasmic. The helical transmembrane segment at 244–268 (ATVLVLAVLLLFVVCWLPFQISTFL) threads the bilayer. Topologically, residues 269–287 (DTLLRLGVLSGCWDEHAVD) are extracellular. A helical membrane pass occupies residues 288–311 (VITQISSYVAYSNSGLNPLVYVIV). Residues 312–367 (GKRFRKKSREVYRVLCQKGGCMGEPVQMENSMGTLRTSISVERQIHKLQDWAGKKQ) lie on the Cytoplasmic side of the membrane. Tyrosine 323 carries the post-translational modification Phosphotyrosine. The S-palmitoyl cysteine moiety is linked to residue cysteine 327. Position 342 is a phosphoserine (serine 342). Position 345 is a phosphothreonine (threonine 345). Phosphoserine; by GRK6 is present on residues serine 349 and serine 351.

It belongs to the G-protein coupled receptor 1 family. Bradykinin receptor subfamily. BDKRB2 sub-subfamily. As to quaternary structure, forms a complex with PECAM1 and GNAQ. Interacts with PECAM1.

It is found in the cell membrane. In terms of biological role, receptor for bradykinin. It is associated with G proteins that activate a phosphatidylinositol-calcium second messenger system. This chain is B2 bradykinin receptor (BDKRB2), found in Sus scrofa (Pig).